A 492-amino-acid polypeptide reads, in one-letter code: uncharacterized protein (492 aa).

Belongs to the FGGY kinase family.

This is an uncharacterized protein from Archaeoglobus fulgidus (strain ATCC 49558 / DSM 4304 / JCM 9628 / NBRC 100126 / VC-16).